The following is a 537-amino-acid chain: Lariat debranching enzyme (537 aa).

A divalent metal cation contacts are provided by cysteine 8, histidine 10, aspartate 39, and asparagine 84. The interval 124–154 (SGIYKGHDFLRGHHEFPPYTESTCRSVYHVR) is lariat recognition loop. The a divalent metal cation site is built by histidine 174, histidine 226, and histidine 228. Disordered stretches follow at residues 242-272 (KAPT…SRLP) and 473-537 (TAAE…EDDD). Over residues 251–260 (SSSSSSSSSS) the composition is skewed to low complexity.

Belongs to the lariat debranching enzyme family. The cofactor is Fe(2+). Zn(2+) serves as cofactor. It depends on Mn(2+) as a cofactor.

Its subcellular location is the nucleus. With respect to regulation, active in presence of diverse metals including Fe(2+), Zn(2+), Mn(2+). Binds two metal cations in two adjacent alpha and beta metal-binding pockets. Its function is as follows. Cleaves the 2'-5' phosphodiester linkage at the branch point of lariat intron pre-mRNAs after splicing and converts them into linear molecules that are subsequently degraded. It thereby facilitates ribonucleotide turnover. This is Lariat debranching enzyme (DBR1) from Drosophila pseudoobscura pseudoobscura (Fruit fly).